Reading from the N-terminus, the 109-residue chain is Thiosulfate sulfurtransferase GlpE (109 aa).

Residues 16–104 form the Rhodanese domain; sequence RSNGAVVVDI…WRATFPSETA (89 aa). The active-site Cysteine persulfide intermediate is the C64.

Belongs to the GlpE family.

It is found in the cytoplasm. It catalyses the reaction thiosulfate + hydrogen cyanide = thiocyanate + sulfite + 2 H(+). The enzyme catalyses thiosulfate + [thioredoxin]-dithiol = [thioredoxin]-disulfide + hydrogen sulfide + sulfite + 2 H(+). Functionally, transferase that catalyzes the transfer of sulfur from thiosulfate to thiophilic acceptors such as cyanide or dithiols. May function in a CysM-independent thiosulfate assimilation pathway by catalyzing the conversion of thiosulfate to sulfite, which can then be used for L-cysteine biosynthesis. This Ectopseudomonas mendocina (strain ymp) (Pseudomonas mendocina) protein is Thiosulfate sulfurtransferase GlpE.